Consider the following 305-residue polypeptide: 3-methyl-2-oxobutanoate hydroxymethyltransferase (305 aa).

2 residues coordinate Mg(2+): Asp52 and Asp95. Residues Asp52–Ser53, Asp95, and Lys125 each bind 3-methyl-2-oxobutanoate. Residue Glu127 participates in Mg(2+) binding. Glu194 serves as the catalytic Proton acceptor.

This sequence belongs to the PanB family. In terms of assembly, homodecamer; pentamer of dimers. It depends on Mg(2+) as a cofactor.

It is found in the cytoplasm. It carries out the reaction 3-methyl-2-oxobutanoate + (6R)-5,10-methylene-5,6,7,8-tetrahydrofolate + H2O = 2-dehydropantoate + (6S)-5,6,7,8-tetrahydrofolate. The protein operates within cofactor biosynthesis; (R)-pantothenate biosynthesis; (R)-pantoate from 3-methyl-2-oxobutanoate: step 1/2. Its function is as follows. Catalyzes the reversible reaction in which hydroxymethyl group from 5,10-methylenetetrahydrofolate is transferred onto alpha-ketoisovalerate to form ketopantoate. The chain is 3-methyl-2-oxobutanoate hydroxymethyltransferase from Anaeromyxobacter sp. (strain Fw109-5).